The chain runs to 438 residues: Na(+)/H(+) antiporter NhaA (438 aa).

The next 11 membrane-spanning stretches (helical) occupy residues 23 to 43 (FGGIFLFLNAVLAMVVANSFL), 62 to 82 (FFIGFSLHNWIDDVLMALFFL), 104 to 124 (SFPVIAAIGGMIAPGLIYFFL), 133 to 153 (GFGIPMATDIAFALGVIMLLG), 162 to 182 (VFLITLAVADDLGAIVVIALF), 185 to 205 (TNLKFAWLLGALGVVLVLAVL), 221 to 241 (VLLWFCVHQSGIHATIAAVIL), 302 to 322 (FLAPISGYFIMPLFAFANAGV), 337 to 357 (LGVILGLCLGKPLGIFLITFI), 372 to 392 (WWHILGAGLLAGIGFTMSMFI), and 410 to 430 (IAILLGSLISGIIGALYLFAL).

Belongs to the NhaA Na(+)/H(+) (TC 2.A.33) antiporter family.

It is found in the cell inner membrane. The enzyme catalyses Na(+)(in) + 2 H(+)(out) = Na(+)(out) + 2 H(+)(in). Na(+)/H(+) antiporter that extrudes sodium in exchange for external protons. This chain is Na(+)/H(+) antiporter NhaA, found in Helicobacter pylori (strain ATCC 700392 / 26695) (Campylobacter pylori).